The sequence spans 493 residues: Aspartyl/glutamyl-tRNA(Asn/Gln) amidotransferase subunit B (493 aa).

The interval histidine 268 to phenylalanine 291 is disordered. Residues arginine 280 to phenylalanine 291 are compositionally biased toward basic and acidic residues.

Belongs to the GatB/GatE family. GatB subfamily. In terms of assembly, heterotrimer of A, B and C subunits.

It catalyses the reaction L-glutamyl-tRNA(Gln) + L-glutamine + ATP + H2O = L-glutaminyl-tRNA(Gln) + L-glutamate + ADP + phosphate + H(+). The catalysed reaction is L-aspartyl-tRNA(Asn) + L-glutamine + ATP + H2O = L-asparaginyl-tRNA(Asn) + L-glutamate + ADP + phosphate + 2 H(+). Functionally, allows the formation of correctly charged Asn-tRNA(Asn) or Gln-tRNA(Gln) through the transamidation of misacylated Asp-tRNA(Asn) or Glu-tRNA(Gln) in organisms which lack either or both of asparaginyl-tRNA or glutaminyl-tRNA synthetases. The reaction takes place in the presence of glutamine and ATP through an activated phospho-Asp-tRNA(Asn) or phospho-Glu-tRNA(Gln). The protein is Aspartyl/glutamyl-tRNA(Asn/Gln) amidotransferase subunit B of Corynebacterium glutamicum (strain ATCC 13032 / DSM 20300 / JCM 1318 / BCRC 11384 / CCUG 27702 / LMG 3730 / NBRC 12168 / NCIMB 10025 / NRRL B-2784 / 534).